We begin with the raw amino-acid sequence, 357 residues long: 4-hydroxymandelate synthase (357 aa).

2 consecutive VOC domains span residues 5 to 129 (EIDY…LIQR) and 158 to 309 (GIDH…IFTA). H161 is a Fe cation binding site. Substrate contacts are provided by H161, S201, T214, H241, and Q305. H241 serves as a coordination point for Fe cation. A Fe cation-binding site is contributed by E320.

Belongs to the 4HPPD family. In terms of assembly, monomer. Requires Fe cation as cofactor.

It carries out the reaction 3-(4-hydroxyphenyl)pyruvate + O2 = (S)-4-hydroxymandelate + CO2. The protein operates within antibiotic biosynthesis; vancomycin biosynthesis. Required to synthesize hydroxyphenylglycine, a recurring skeletal component of nonproteinogenic macrocyclic peptide antibiotics such as vancomycin. Catalyzes the conversion of p-hydroxyphenylpyruvate to p-hydroxymandelate. The decarboxylation and hydroxylation activities of HmaS show novel and distinct regioselectivity, compared to all other known p-hydroxyphenylpyruvate dioxygenases, by hydroxylating the benzylic position of the substrate instead of the phenyl ring. This chain is 4-hydroxymandelate synthase, found in Amycolatopsis orientalis (Nocardia orientalis).